A 271-amino-acid chain; its full sequence is Dioscorin dioA3 (271 aa).

Positions 1-21 (MSSSTLLHLLLLSSLLFSCLS) are cleaved as a signal peptide. The Alpha-carbonic anhydrase domain maps to 28–262 (DEFSYIEGNP…TNFRSVFYFE (235 aa)). A disulfide bridge links C53 with C212. H94 acts as the Proton acceptor in catalysis. L-ascorbate is bound by residues D95, 120–122 (HFH), Q139, and 208–209 (TA).

The protein belongs to the alpha-carbonic anhydrase family. As to quaternary structure, monomer. Homodimer. Not glycosylated. In terms of tissue distribution, expressed in tuber (at protein level).

It carries out the reaction hydrogencarbonate + H(+) = CO2 + H2O. The catalysed reaction is 2 monodehydro-L-ascorbate radical + NADH + H(+) = 2 L-ascorbate + NAD(+). Its activity is regulated as follows. The carbonate dehydratase activity is not substantially changed by the addition of Zn(2+). Storage protein of tuber. Involved in protection against oxidative stress. Has carbonate dehydratase, trypsin inhibitor, dehydroascorbate (DHA) reductase and monodehydroascorbate (MDA) reductase activities. Catalyzes the reactions of carbonate dehydratase and DHA reductase independently of zinc and glutathione (GSH). The coupled reaction is capable of recycling a plant antioxidant ascorbate using ubiquitous compounds H(2)O and CO(2). Exhibits antioxidant activity. Able to scavenge 1,1-diphenyl-2-picrylhydrazyl (DPPH) radical. Exhibits immunomodulatory activity. Activates Toll-like receptor 4 signaling pathways by up-regulating the gene expression of pro-inflammatory cytokines, such as tumor necrosis factor alpha, interleukin-1 beta and interleukin-6, and chemokines RANTES and MCP-1, in mouse RAW 264.7 macrophages. Stimulates the phagocytosis of E.coli by the LPS-treated mouse macrophages. This is Dioscorin dioA3 from Dioscorea japonica (Japanese yam).